The primary structure comprises 94 residues: DNA-directed RNA polymerase subunit omega (94 aa).

Belongs to the RNA polymerase subunit omega family. In terms of assembly, the RNAP catalytic core consists of 2 alpha, 1 beta, 1 beta' and 1 omega subunit. When a sigma factor is associated with the core the holoenzyme is formed, which can initiate transcription.

The enzyme catalyses RNA(n) + a ribonucleoside 5'-triphosphate = RNA(n+1) + diphosphate. In terms of biological role, promotes RNA polymerase assembly. Latches the N- and C-terminal regions of the beta' subunit thereby facilitating its interaction with the beta and alpha subunits. In Limosilactobacillus fermentum (strain NBRC 3956 / LMG 18251) (Lactobacillus fermentum), this protein is DNA-directed RNA polymerase subunit omega.